Consider the following 365-residue polypeptide: DNA replication and repair protein RecF (365 aa).

Residue 30 to 37 (GDNGEGKT) participates in ATP binding.

The protein belongs to the RecF family.

The protein localises to the cytoplasm. In terms of biological role, the RecF protein is involved in DNA metabolism; it is required for DNA replication and normal SOS inducibility. RecF binds preferentially to single-stranded, linear DNA. It also seems to bind ATP. In Leptospira interrogans serogroup Icterohaemorrhagiae serovar Lai (strain 56601), this protein is DNA replication and repair protein RecF.